A 435-amino-acid chain; its full sequence is Legumain (435 aa).

An N-terminal signal peptide occupies residues 1–17 (MTWRVAVLLSLVLGAGA). N93 carries an N-linked (GlcNAc...) asparagine glycan. H150 is an active-site residue. N-linked (GlcNAc...) asparagine glycosylation occurs at N169. C191 serves as the catalytic Nucleophile. 2 N-linked (GlcNAc...) asparagine glycosylation sites follow: N265 and N274. Positions 326 to 435 (DVKESQNLIG…AMDKVCLSHY (110 aa)) are excised as a propeptide. 2 disulfides stabilise this stretch: C380/C414 and C392/C431.

The protein belongs to the peptidase C13 family. In terms of assembly, homodimer before autocatalytic removal of the propeptide. Monomer after autocatalytic processing. May interact with integrins. In terms of processing, glycosylated. Post-translationally, activated by autocatalytic processing at pH 4. In terms of tissue distribution, detected in kidney proximal tubules (at protein level). Ubiquitous. Particularly abundant in kidney and placenta.

The protein localises to the lysosome. It carries out the reaction Hydrolysis of proteins and small molecule substrates at -Asn-|-Xaa- bonds.. Its activity is regulated as follows. Inhibited by cystatin-C. Functionally, has a strict specificity for hydrolysis of asparaginyl bonds. Can also cleave aspartyl bonds slowly, especially under acidic conditions. Involved in the processing of proteins for MHC class II antigen presentation in the lysosomal/endosomal system. Also involved in MHC class I antigen presentation in cross-presenting dendritic cells by mediating cleavage and maturation of Perforin-2 (MPEG1), thereby promoting antigen translocation in the cytosol. Required for normal lysosomal protein degradation in renal proximal tubules. Required for normal degradation of internalized EGFR. Plays a role in the regulation of cell proliferation via its role in EGFR degradation. This is Legumain (Lgmn) from Mus musculus (Mouse).